The primary structure comprises 451 residues: MVFSDQQLFEKVVEILKPFDLSVVDYEEICDRMGESMRLGLQKSTNEKSSIKMFPSYVTKTPNGTETGNFLALDLGGTNYRVLSVTLEGKGKSPRIQERTYCIPAEKMSGSGTELFKYIAETLADFLENNGMKDKKFDLGFTFSFPCVQKGLTHATLVRWTKGFSADGVEGHNVAELLQTELDKRELNVKCVAVVNDTVGTLASCALEDPKCAVGLIVGTGTNVAYIEDSSKVELMDGVKEPEVVINTEWGAFGEKGELDCWRTQFDKSMDIDSLHPGKQLYEKMVSGMYLGELVRHIIVYLVEQKILFRGDLPERLKVRNSLLTRYLTDVERDPAHLLYNTHYMLTDDLHVPVVEPIDNRIVRYACEMVVKRAAYLAGAGIACILRRINRSEVTVGVDGSLYKFHPKFCERMTDMVDKLKPKNTRFCLRLSEDGSGKGAAAIAASCTRQN.

Residues 6–445 form the Hexokinase domain; that stretch reads QQLFEKVVEI…SGKGAAAIAA (440 aa). The segment at 63–195 is hexokinase small subdomain; the sequence is NGTETGNFLA…ELNVKCVAVV (133 aa). Position 74–79 (74–79) interacts with ATP; it reads DLGGTN. Residues Ser-144, 161–162, 196–197, 222–223, Glu-249, and Glu-283 each bind substrate; these read TK, ND, and TN. The interval 196–434 is hexokinase large subdomain; it reads NDTVGTLASC…TRFCLRLSED (239 aa). ATP is bound by residues 288–289, 325–329, and 401–405; these read GM, TRYLT, and SLYKF.

Belongs to the hexokinase family. In terms of assembly, monomer.

The catalysed reaction is a D-hexose + ATP = a D-hexose 6-phosphate + ADP + H(+). The enzyme catalyses D-mannose + ATP = D-mannose 6-phosphate + ADP + H(+). It catalyses the reaction D-fructose + ATP = D-fructose 6-phosphate + ADP + H(+). It carries out the reaction D-glucose + ATP = D-glucose 6-phosphate + ADP + H(+). Its pathway is carbohydrate metabolism; hexose metabolism. It participates in carbohydrate degradation; glycolysis; D-glyceraldehyde 3-phosphate and glycerone phosphate from D-glucose: step 1/4. Its function is as follows. Catalyzes the phosphorylation of various hexoses to hexose 6-phosphate. This chain is Hexokinase, found in Schistosoma mansoni (Blood fluke).